A 244-amino-acid chain; its full sequence is Phosphonates import ATP-binding protein PhnC 2 (244 aa).

Positions 6-244 constitute an ABC transporter domain; it reads IECHNLETAY…LQAQFVVNNQ (239 aa). Residue 41-48 participates in ATP binding; sequence GLNGAGKS.

This sequence belongs to the ABC transporter superfamily. Phosphonates importer (TC 3.A.1.9.1) family. As to quaternary structure, the complex is composed of two ATP-binding proteins (PhnC), two transmembrane proteins (PhnE) and a solute-binding protein (PhnD).

It localises to the cell inner membrane. The catalysed reaction is phosphonate(out) + ATP + H2O = phosphonate(in) + ADP + phosphate + H(+). Its function is as follows. Part of the ABC transporter complex PhnCDE involved in phosphonates import. Responsible for energy coupling to the transport system. This is Phosphonates import ATP-binding protein PhnC 2 from Nostoc sp. (strain PCC 7120 / SAG 25.82 / UTEX 2576).